Reading from the N-terminus, the 274-residue chain is Fatty-acid O-methyltransferase (274 aa).

It belongs to the methyltransferase superfamily.

The enzyme catalyses a fatty acid + S-adenosyl-L-methionine = a fatty acid methyl ester + S-adenosyl-L-homocysteine. Its function is as follows. O-methyltransferase that modifies the hydroxy group of the fatty acids. Oleate is the most effective fatty acid acceptor. The protein is Fatty-acid O-methyltransferase (mtf2) of Mycolicibacterium smegmatis (strain ATCC 700084 / mc(2)155) (Mycobacterium smegmatis).